We begin with the raw amino-acid sequence, 184 residues long: uncharacterized protein (184 aa).

Belongs to the PhzF family.

Its subcellular location is the cytoplasm. It is found in the nucleus. This is an uncharacterized protein from Schizosaccharomyces pombe (strain 972 / ATCC 24843) (Fission yeast).